Here is a 244-residue protein sequence, read N- to C-terminus: uncharacterized protein (244 aa).

This is an uncharacterized protein from Ostreid herpesvirus 1 (isolate France) (OsHV-1).